The primary structure comprises 59 residues: MANTIKVTQTKSSIGRLPKHVACLRGLGLRRINHTVELEDTACVRGMINKVHYMVKIEE.

This sequence belongs to the universal ribosomal protein uL30 family. As to quaternary structure, part of the 50S ribosomal subunit.

This Photobacterium profundum (strain SS9) protein is Large ribosomal subunit protein uL30.